Consider the following 707-residue polypeptide: Glucose starvation modulator protein 1 (707 aa).

The segment at residues 20–48 (CTFCHQKHLQCSNERPCKNCVKRNIADQC) is a DNA-binding region (zn(2)-C6 fungal-type). Disordered stretches follow at residues 63–122 (NSKA…PNDL), 154–188 (QPTH…PPES), 260–283 (DQQQ…GPSH), and 385–404 (NVSS…SAIA). Low complexity-rich tracts occupy residues 66-79 (AVAA…TTTT) and 91-104 (SPSI…ISPI). Composition is skewed to polar residues over residues 105-114 (NTSTFDTNGH) and 154-172 (QPTH…QVQP). Positions 178–188 (SSVPPSAPPES) are enriched in low complexity. The segment covering 260-274 (DQQQSSSEATGTSAS) has biased composition (polar residues). The region spanning 522–591 (DYEKLSQLNS…FQLFKSVAVG (70 aa)) is the PAS domain. A compositionally biased stretch (low complexity) spans 621-652 (NYNNNYNHNYSHNNNNNNNSNNSNNNGMSTGA). The tract at residues 621-659 (NYNNNYNHNYSHNNNNNNNSNNSNNNGMSTGAGNSGDGD) is disordered.

It belongs to the ERT1/acuK family.

The protein resides in the nucleus. In terms of biological role, transcription factor which regulates nonfermentable carbon utilization. In Lodderomyces elongisporus (strain ATCC 11503 / CBS 2605 / JCM 1781 / NBRC 1676 / NRRL YB-4239) (Yeast), this protein is Glucose starvation modulator protein 1 (GSM1).